Here is a 395-residue protein sequence, read N- to C-terminus: Vomeronasal type-1 receptor 2 (395 aa).

A helical transmembrane segment spans residues 12–32 (LYPINISAAWHLGPLPVSCFV). Over 33-51 (SNKYQCSLAFGATTGLRVL) the chain is Extracellular. Residues 52–72 (VVVVPQTQLSFLSSLCLVSLF) form a helical membrane-spanning segment. Topologically, residues 73–93 (LHSLVSAHGEKPTKPVGLDPT) are cytoplasmic. The chain crosses the membrane as a helical span at residues 94–114 (LFQVVVGILGNFSLLYYYMFL). Residues 115–170 (YFRGYKPRSTDLILRHLTVADSLVILSKRIPETMATFGLKHFDNYFGCKFLLYAHR) are Extracellular-facing. Residues 171–191 (VGRGVSIGSTCLLSVFQVITI) form a helical membrane-spanning segment. Over 192 to 208 (NPRNSRWAEMKVKAPTY) the chain is Cytoplasmic. The helical transmembrane segment at 209-229 (IGLSNILCWAFHMLVNAIFPI) threads the bilayer. Over 230–267 (YTTGKWSNNNITKKGDLGYCSAPLSDEVTKSVYAALTS) the chain is Extracellular. A glycan (N-linked (GlcNAc...) asparagine) is linked at Asn239. Residues 268–288 (FHDVLCLGLMLWASSSIVLVL) traverse the membrane as a helical segment. Residues 289-316 (YRHKQQVQHICRNNLYPNSSPGNRAIQS) lie on the Cytoplasmic side of the membrane. A helical membrane pass occupies residues 317–337 (ILALVSTFALCYALSFITYVY). At 338-346 (LALFDNSSW) the chain is on the extracellular side. Residue Asn343 is glycosylated (N-linked (GlcNAc...) asparagine). Residues 347–367 (WLVNTAALIIACFPTISPFVL) form a helical membrane-spanning segment. Over 368–395 (MCRDPSRSRLCSICCRRNRRFFHDFRKM) the chain is Cytoplasmic.

This sequence belongs to the G-protein coupled receptor 1 family.

The protein resides in the cell membrane. In terms of biological role, putative pheromone receptor. This is Vomeronasal type-1 receptor 2 (VN1R2) from Homo sapiens (Human).